The primary structure comprises 742 residues: Photosystem I P700 chlorophyll a apoprotein A2 (742 aa).

Helical transmembrane passes span leucine 46–alanine 69, leucine 135–glutamine 158, leucine 175–isoleucine 199, isoleucine 273–tyrosine 291, leucine 336–glycine 359, serine 375–valine 401, alanine 423–histidine 445, and phenylalanine 525–isoleucine 543. Positions 567 and 576 each coordinate [4Fe-4S] cluster. Transmembrane regions (helical) follow at residues alanine 583–tryptophan 604 and leucine 651–isoleucine 673. Divinyl chlorophyll a contacts are provided by histidine 662, methionine 670, and tyrosine 678. Tryptophan 679 is a binding site for phylloquinone. The chain crosses the membrane as a helical span at residues leucine 715–alanine 735.

It belongs to the PsaA/PsaB family. As to quaternary structure, the PsaA/B heterodimer binds the P700 divinyl chlorophyll special pair and subsequent electron acceptors. PSI consists of a core antenna complex that captures photons, and an electron transfer chain that converts photonic excitation into a charge separation. The cyanobacterial PSI reaction center is composed of one copy each of PsaA,B,C,D,E,F,I,J,K,L,M and X, and forms trimeric complexes. The cofactor is PSI electron transfer chain: 5 divinyl chlorophyll a, 1 divinyl chlorophyll a', 2 phylloquinones and 3 4Fe-4S clusters. PSI core antenna: 90 divinyl chlorophyll a, 22 carotenoids, 3 phospholipids and 1 galactolipid. P700 is a divinyl chlorophyll a/divinyl chlorophyll a' dimer, A0 is one or more divinyl chlorophyll a, A1 is one or both phylloquinones and FX is a shared 4Fe-4S iron-sulfur center..

It is found in the cellular thylakoid membrane. It catalyses the reaction reduced [plastocyanin] + hnu + oxidized [2Fe-2S]-[ferredoxin] = oxidized [plastocyanin] + reduced [2Fe-2S]-[ferredoxin]. Its function is as follows. PsaA and PsaB bind P700, the primary electron donor of photosystem I (PSI), as well as the electron acceptors A0, A1 and FX. PSI is a plastocyanin/cytochrome c6-ferredoxin oxidoreductase, converting photonic excitation into a charge separation, which transfers an electron from the donor P700 chlorophyll pair to the spectroscopically characterized acceptors A0, A1, FX, FA and FB in turn. Oxidized P700 is reduced on the lumenal side of the thylakoid membrane by plastocyanin or cytochrome c6. This chain is Photosystem I P700 chlorophyll a apoprotein A2, found in Prochlorococcus marinus subsp. pastoris (strain CCMP1986 / NIES-2087 / MED4).